The following is a 202-amino-acid chain: UPF0637 protein Exig_2520 (202 aa).

Belongs to the UPF0637 family.

The chain is UPF0637 protein Exig_2520 from Exiguobacterium sibiricum (strain DSM 17290 / CCUG 55495 / CIP 109462 / JCM 13490 / 255-15).